The following is a 343-amino-acid chain: Calcium/calmodulin-dependent protein kinase type 1B (343 aa).

Positions 15–270 (YEIREKLGSG…CQQALQHLWI (256 aa)) constitute a Protein kinase domain. Residues 21–29 (LGSGAFSEV) and K44 contribute to the ATP site. The Proton acceptor role is filled by D136. Positions 290-311 (KNFARTHWKRAFNATSFLRHIR) are calmodulin-binding. Positions 314 to 343 (GQSPEGEEASRQGMTRHSHPGLGTSQSPKW) are disordered. A Phosphoserine modification is found at S338.

Belongs to the protein kinase superfamily. CAMK Ser/Thr protein kinase family. CaMK subfamily. Post-translationally, isoform 1 and isoform 2 are phosphorylated by CAMKK1. Isoform 1 is expressed in liver, heart, lung, kidney, spleen and testis. Isoform 2 is predominantly expressed in cerebrum and cerebellum.

It localises to the cytoplasm. The protein resides in the nucleus. It carries out the reaction L-seryl-[protein] + ATP = O-phospho-L-seryl-[protein] + ADP + H(+). The catalysed reaction is L-threonyl-[protein] + ATP = O-phospho-L-threonyl-[protein] + ADP + H(+). Its activity is regulated as follows. Activated by Ca(2+)/calmodulin. Must be phosphorylated to be maximally active. Activated by CAMKK1. Calcium/calmodulin-dependent protein kinase belonging to a proposed calcium-triggered signaling cascade. In vitro, isoform 1 and isoform 2 phosphorylate CREB1, SYN1/synapsin I. Phosphorylates and activates CAMK1. In Rattus norvegicus (Rat), this protein is Calcium/calmodulin-dependent protein kinase type 1B (Pnck).